We begin with the raw amino-acid sequence, 269 residues long: Cbp/p300-interacting transactivator 2 (269 aa).

The segment at 142–200 is disordered; sequence AGHQMNGTNQHFRDCNPKHSGGSSTPGGAGGSGTPGGSGGTSGGAGGSSAGGSGGGSTM. Residues 165–198 are compositionally biased toward gly residues; the sequence is STPGGAGGSGTPGGSGGTSGGAGGSSAGGSGGGS.

This sequence belongs to the CITED family. In terms of assembly, interacts (via C-terminus) with EP300 (via CH1 domain); the interaction is stimulated in response to hypoxia. Interacts with PPARA. Interacts (via C-terminus) with TFAP2A, TFAP2B and TFAP2C. Interacts (via C-terminus) with SMAD2. Interacts (via C-terminus) with SMAD3 (via MH2 domain). Interacts with LHX2 (via LIM domains). Interacts with WT1 isoform 1 and isoform 3. Ubiquitous.

The protein localises to the nucleus. In terms of biological role, transcriptional coactivator of the p300/CBP-mediated transcription complex. Acts as a bridge, linking TFAP2 transcription factors and the p300/CBP transcriptional coactivator complex in order to stimulate TFAP2-mediated transcriptional activation. Positively regulates TGF-beta signaling through its association with the SMAD/p300/CBP-mediated transcriptional coactivator complex. Stimulates the peroxisome proliferator-activated receptors PPARA transcriptional activity. Enhances estrogen-dependent transactivation mediated by estrogen receptors. Also acts as a transcriptional corepressor; interferes with the binding of the transcription factors HIF1A or STAT2 and the p300/CBP transcriptional coactivator complex. Participates in sex determination and early gonad development by stimulating transcription activation of SRY. Plays a role in controlling left-right patterning during embryogenesis; potentiates transcriptional activation of NODAL-mediated gene transcription in the left lateral plate mesoderm (LPM). Plays an essential role in differentiation of the adrenal cortex from the adrenogonadal primordium (AGP); stimulates WT1-mediated transcription activation thereby up-regulating the nuclear hormone receptor NR5A1 promoter activity. Associates with chromatin to the PITX2 P1 promoter region. This chain is Cbp/p300-interacting transactivator 2 (Cited2), found in Mus musculus (Mouse).